Here is a 142-residue protein sequence, read N- to C-terminus: Hemoglobin subunit alpha-4 (142 aa).

The Globin domain occupies 2–142 (VLSAADKSNV…VSTVLTSKYR (141 aa)). Histidine 59 contacts O2. A heme b-binding site is contributed by histidine 88.

This sequence belongs to the globin family. As to quaternary structure, heterotetramer of two alpha chains and two beta chains. Red blood cells.

Its function is as follows. Involved in oxygen transport from the lung to the various peripheral tissues. The polypeptide is Hemoglobin subunit alpha-4 (Bubalus bubalis (Domestic water buffalo)).